Here is a 561-residue protein sequence, read N- to C-terminus: Putative transport protein Ent638_1362 (561 aa).

5 helical membrane-spanning segments follow: residues 8–28 (LLNG…LCLG), 32–52 (LGSV…LLGQ), 66–86 (FMLF…SIFF), 94–114 (MLAL…GKLF), and 158–178 (HLSL…IVAA). RCK C-terminal domains lie at 202 to 288 (LDTD…SFRN) and 292 to 373 (VFDR…RIGF). The next 5 membrane-spanning stretches (helical) occupy residues 383-403 (LLAF…TFQF), 406-426 (FSFG…LGFL), 447-467 (FGLM…IGHS), 475-495 (MLVA…LFGA), and 540-560 (AIAN…WPGL).

This sequence belongs to the AAE transporter (TC 2.A.81) family. YbjL subfamily.

Its subcellular location is the cell membrane. In Enterobacter sp. (strain 638), this protein is Putative transport protein Ent638_1362.